A 354-amino-acid chain; its full sequence is MSVPDRKRALEAAIAYIEKQFGAGSIMSLGKHSSAHEISTIKTGALSLDLALGIGGVPKGRIIEIFGPESSGKTTLATHIVANAQKMGGVAAYIDAEHALDPNYAALIGANINDLMISQPDCGEDALSIAELLARSGAVDVIVIDSVAALVPKSELEGEIGDVHVGLQARMMSQALRKLTATLARTNTCAIFINQIREKIGVSFGNPETTTGGRALKFYSSIRMDIRRIGAIKGGENFDIGNRIKVKVAKNKLAPPFRTAEFDILFNEGISSAGCIIDLAVEKNIIDKKGSWFNYQDRKLGQGREAVREELKRNKELFQELERRIYESVQASSSQALASACLDQEAREVAEAAK.

67-74 (GPESSGKT) provides a ligand contact to ATP.

Belongs to the RecA family.

Its subcellular location is the cytoplasm. Its function is as follows. Can catalyze the hydrolysis of ATP in the presence of single-stranded DNA, the ATP-dependent uptake of single-stranded DNA by duplex DNA, and the ATP-dependent hybridization of homologous single-stranded DNAs. It interacts with LexA causing its activation and leading to its autocatalytic cleavage. This Chlamydia muridarum (strain MoPn / Nigg) protein is Protein RecA.